Reading from the N-terminus, the 609-residue chain is Zinc metalloproteinase-disintegrin-like VAP2B (609 aa).

Positions 1-20 (MIQVLLVTICLAAFPYQGSS) are cleaved as a signal peptide. Positions 21-189 (IILESGNVND…KKASQLVVTA (169 aa)) are excised as a propeptide. Glu190 bears the Pyrrolidone carboxylic acid (Glu) mark. Residues 198–393 (RFVELFLVVD…HNPECILNEP (196 aa)) form the Peptidase M12B domain. The Ca(2+) site is built by Glu201 and Asp285. Cystine bridges form between Cys308–Cys388, Cys348–Cys372, and Cys350–Cys355. His333 provides a ligand contact to Zn(2+). Glu334 is a catalytic residue. Zn(2+)-binding residues include His337 and His343. The N-linked (GlcNAc...) asparagine glycan is linked to Asn371. Cys388, Asn391, Val403, Asn406, Leu408, Glu410, Glu413, and Asp416 together coordinate Ca(2+). One can recognise a Disintegrin domain in the interval 401–487 (PPVCGNELLE…ECPADVFHKN (87 aa)). 22 disulfides stabilise this stretch: Cys404-Cys423, Cys404-Cys433, Cys415-Cys428, Cys415-Cys433, Cys417-Cys423, Cys427-Cys450, Cys441-Cys447, Cys446-Cys472, Cys459-Cys479, Cys466-Cys491, Cys466-Cys498, Cys491-Cys503, Cys498-Cys503, Cys510-Cys525, Cys510-Cys560, Cys525-Cys571, Cys538-Cys548, Cys548-Cys555, Cys555-Cys597, Cys560-Cys571, Cys591-Cys602, and Cys597-Cys602. Residues 459–472 (CRASMSECDPAEHC) form an inhibits platelet aggregation region. Residues 465-467 (ECD) carry the D/ECD-tripeptide motif. Residues Asp467, Pro468, Glu470, Asp482, and Val483 each coordinate Ca(2+).

This sequence belongs to the venom metalloproteinase (M12B) family. P-III subfamily. P-IIIb sub-subfamily. In terms of assembly, monomer or heterodimer; non-covalently linked. Interacts with fibrillar collagen. Zn(2+) is required as a cofactor. The N-terminus is blocked. In terms of tissue distribution, expressed by the venom gland.

It localises to the secreted. Functionally, zinc metalloprotease that abolishes platelet aggregation induced by collagen, but has no effect on platelet aggregation induced by ADP or thromboxane analog. This inhibition may be due to its ability to bind collagen and block the binding site on collagen for platelets and/or to its ability to bind to the platelet alpha-2/beta-1 collagen receptor (ITGA2/ITGB1) to block its interaction with collagen and hence prevent platelet stimulation. In terms of biological role, abolishes platelet aggregation induced by collagen (IC(50)=66 nM) but not ADP-stimulated platelet aggregation. This inhibition may be due to its ability to bind collagen and block the binding site on collagen for platelets and/or to its ability to bind to the platelet alpha-2/beta-1 collagen receptor (ITGA2/ITGB1) to block its interaction with collagen and hence prevent platelet stimulation. The chain is Zinc metalloproteinase-disintegrin-like VAP2B from Crotalus atrox (Western diamondback rattlesnake).